We begin with the raw amino-acid sequence, 207 residues long: A-type ATP synthase subunit E (207 aa).

Belongs to the V-ATPase E subunit family. As to quaternary structure, has multiple subunits with at least A(3), B(3), C, D, E, F, H, I and proteolipid K(x).

Its subcellular location is the cell membrane. Component of the A-type ATP synthase that produces ATP from ADP in the presence of a proton gradient across the membrane. This is A-type ATP synthase subunit E from Hyperthermus butylicus (strain DSM 5456 / JCM 9403 / PLM1-5).